Consider the following 54-residue polypeptide: Ovomucoid (54 aa).

The 51-residue stretch at 4–54 folds into the Kazal-like domain; sequence VDCSDHPKPVCSLEYMPLCGSDSKTYSNKCDFCNAVVESNGTLTLSHFGKC. 3 disulfide bridges follow: Cys6–Cys36, Cys14–Cys33, and Cys22–Cys54. Asn43 is a glycosylation site (N-linked (GlcNAc...) asparagine).

The protein resides in the secreted. The chain is Ovomucoid from Rhea americana (Greater rhea).